The primary structure comprises 371 residues: Probable tRNA sulfurtransferase (371 aa).

Residues Asn-54–Val-156 form the THUMP domain. ATP contacts are provided by residues Leu-174 to Phe-175, Asn-199 to Phe-200, Lys-254, Gly-276, and Gln-285.

It belongs to the ThiI family.

It is found in the cytoplasm. The enzyme catalyses [ThiI sulfur-carrier protein]-S-sulfanyl-L-cysteine + a uridine in tRNA + 2 reduced [2Fe-2S]-[ferredoxin] + ATP + H(+) = [ThiI sulfur-carrier protein]-L-cysteine + a 4-thiouridine in tRNA + 2 oxidized [2Fe-2S]-[ferredoxin] + AMP + diphosphate. It carries out the reaction [ThiS sulfur-carrier protein]-C-terminal Gly-Gly-AMP + S-sulfanyl-L-cysteinyl-[cysteine desulfurase] + AH2 = [ThiS sulfur-carrier protein]-C-terminal-Gly-aminoethanethioate + L-cysteinyl-[cysteine desulfurase] + A + AMP + 2 H(+). The protein operates within cofactor biosynthesis; thiamine diphosphate biosynthesis. Functionally, catalyzes the ATP-dependent transfer of a sulfur to tRNA to produce 4-thiouridine in position 8 of tRNAs, which functions as a near-UV photosensor. Also catalyzes the transfer of sulfur to the sulfur carrier protein ThiS, forming ThiS-thiocarboxylate. This is a step in the synthesis of thiazole, in the thiamine biosynthesis pathway. The sulfur is donated as persulfide by IscS. The protein is Probable tRNA sulfurtransferase of Saccharolobus solfataricus (strain ATCC 35092 / DSM 1617 / JCM 11322 / P2) (Sulfolobus solfataricus).